The sequence spans 351 residues: C(7)-cyclitol 7-kinase (351 aa).

Belongs to the ROK (NagC/XylR) family.

The enzyme catalyses valienone + ATP = valienone 7-phosphate + ADP + H(+). It catalyses the reaction validone + ATP = validone 7-phosphate + ADP + H(+). In terms of biological role, involved in the biosynthesis of the antifungal agent validamycin A. Catalyzes the phosphorylation of valienone and validone to their 7-phosphate derivatives. This is C(7)-cyclitol 7-kinase from Streptomyces hygroscopicus subsp. limoneus.